Reading from the N-terminus, the 710-residue chain is Putative transmembrane protein ORF710 (710 aa).

A signal peptide spans 1–33; that stretch reads MKLDRKKKRLLLKTIFSIVILILPLTFLHPTNS. 3 helical membrane-spanning segments follow: residues 41 to 61, 76 to 95, and 689 to 709; these read VPIQIIYNYNVSGGVIYTAPL, YGTLLYSYLFSTNPAFVVWY, and VAIVSMAYGTKIWIGVFIFAI.

Its subcellular location is the host membrane. The polypeptide is Putative transmembrane protein ORF710 (Acidianus convivator (ATV)).